A 20-amino-acid chain; its full sequence is Kassinatuerin-2 (20 aa).

Residue Ile-20 is modified to Isoleucine amide.

Expressed by the skin dorsal glands.

The protein resides in the secreted. Functionally, has no antimicrobial activities against bacteria (E.coli and S.aureus) nor against the fungus C.albicans. In Kassina senegalensis (Senegal running frog), this protein is Kassinatuerin-2.